Reading from the N-terminus, the 206-residue chain is uncharacterized protein (206 aa).

An N-terminal signal peptide occupies residues Met-1 to Ala-18.

This is an uncharacterized protein from Haemophilus influenzae (strain ATCC 51907 / DSM 11121 / KW20 / Rd).